A 284-amino-acid polypeptide reads, in one-letter code: 4-diphosphocytidyl-2-C-methyl-D-erythritol kinase (284 aa).

K14 is an active-site residue. Position 98-108 (98-108 (PMGGGIGGGSS)) interacts with ATP. D140 is an active-site residue.

This sequence belongs to the GHMP kinase family. IspE subfamily.

It catalyses the reaction 4-CDP-2-C-methyl-D-erythritol + ATP = 4-CDP-2-C-methyl-D-erythritol 2-phosphate + ADP + H(+). It functions in the pathway isoprenoid biosynthesis; isopentenyl diphosphate biosynthesis via DXP pathway; isopentenyl diphosphate from 1-deoxy-D-xylulose 5-phosphate: step 3/6. In terms of biological role, catalyzes the phosphorylation of the position 2 hydroxy group of 4-diphosphocytidyl-2C-methyl-D-erythritol. The protein is 4-diphosphocytidyl-2-C-methyl-D-erythritol kinase of Shewanella woodyi (strain ATCC 51908 / MS32).